Consider the following 165-residue polypeptide: Putative defense protein Hdd11 (165 aa).

The signal sequence occupies residues 1 to 17; it reads MWATYVFIAVSLACANG. Residues 18–165 enclose the Reelin domain; it reads YSSGAPESVC…VESGPVKVIS (148 aa). A disulfide bridge links Cys-27 with Cys-104.

The protein belongs to the insect defense protein family.

It is found in the secreted. Functionally, as this protein is expressed upon bacterial infection, it may have antimicrobial activity. The protein is Putative defense protein Hdd11 of Hyphantria cunea (Fall webworm moth).